A 393-amino-acid polypeptide reads, in one-letter code: S-adenosylmethionine synthase (393 aa).

Glu-10 lines the Mg(2+) pocket. Residue His-16 participates in ATP binding. Glu-44 contributes to the K(+) binding site. Glu-57 and Gln-100 together coordinate L-methionine. Residues 168 to 170, 236 to 239, Asp-247, 253 to 254, Ala-270, Lys-274, and Lys-278 each bind ATP; these read DGK, SGRF, and RK. Asp-247 provides a ligand contact to L-methionine. Lys-278 provides a ligand contact to L-methionine.

The protein belongs to the AdoMet synthase family. As to quaternary structure, homotetramer. Requires Mn(2+) as cofactor. The cofactor is Mg(2+). Co(2+) serves as cofactor. K(+) is required as a cofactor.

Its subcellular location is the cytoplasm. The enzyme catalyses L-methionine + ATP + H2O = S-adenosyl-L-methionine + phosphate + diphosphate. Its pathway is amino-acid biosynthesis; S-adenosyl-L-methionine biosynthesis; S-adenosyl-L-methionine from L-methionine: step 1/1. Functionally, catalyzes the formation of S-adenosylmethionine from methionine and ATP. The reaction comprises two steps that are both catalyzed by the same enzyme: formation of S-adenosylmethionine (AdoMet) and triphosphate, and subsequent hydrolysis of the triphosphate. In Musa acuminata (Banana), this protein is S-adenosylmethionine synthase (METK).